A 189-amino-acid polypeptide reads, in one-letter code: Small ribosomal subunit protein uS7 (189 aa).

Belongs to the universal ribosomal protein uS7 family. In terms of assembly, part of the 30S ribosomal subunit.

One of the primary rRNA binding proteins, it binds directly to 16S rRNA where it nucleates assembly of the head domain of the 30S subunit. Is located at the subunit interface close to the decoding center. The sequence is that of Small ribosomal subunit protein uS7 from Methanosarcina acetivorans (strain ATCC 35395 / DSM 2834 / JCM 12185 / C2A).